The sequence spans 101 residues: Protein Tat (101 aa).

The segment at 1-24 is interaction with human CREBBP; it reads MDPVDPKLEPWNHPGSQPTTPCNK. Positions 1 to 48 are transactivation; that stretch reads MDPVDPKLEPWNHPGSQPTTPCNKCYCKVCCWHCQVCFLNKGLGISYG. Residues C22, C25, and C27 each contribute to the Zn(2+) site. The tract at residues 22–37 is cysteine-rich; that stretch reads CNKCYCKVCCWHCQVC. Position 28 is an N6-acetyllysine; by host PCAF (K28). C30, H33, C34, and C37 together coordinate Zn(2+). The interval 38–48 is core; the sequence is FLNKGLGISYG. A disordered region spans residues 48-101; sequence GRKKRRPRRGTPQGSKDHQNPVPKQPLPITSGNPTGSEKPKKEVASKTETDPLD. The Nuclear localization signal, RNA-binding (TAR), and protein transduction signature appears at 49 to 57; sequence RKKRRPRRG. The interval 49-86 is interaction with the host capping enzyme RNGTT; that stretch reads RKKRRPRRGTPQGSKDHQNPVPKQPLPITSGNPTGSEK. An N6-acetyllysine; by host EP300 and GCN5L2 mark is found at K50 and K51. R52 and R53 each carry asymmetric dimethylarginine; by host PRMT6. Residue K71 forms a Glycyl lysine isopeptide (Lys-Gly) (interchain with G-Cter in ubiquitin) linkage. Residues 85–101 show a composition bias toward basic and acidic residues; the sequence is EKPKKEVASKTETDPLD.

This sequence belongs to the lentiviruses Tat family. Interacts with host CCNT1. Associates with the P-TEFb complex composed at least of Tat, P-TEFb (CDK9 and CCNT1), TAR RNA, RNA Pol II. Recruits the HATs CREBBP, TAF1/TFIID, EP300, PCAF and GCN5L2. Interacts with host KAT5/Tip60; this interaction targets the latter to degradation. Interacts with the host deacetylase SIRT1. Interacts with host capping enzyme RNGTT; this interaction stimulates RNGTT. Binds to host KDR, and to the host integrins ITGAV/ITGB3 and ITGA5/ITGB1. Interacts with host KPNB1/importin beta-1 without previous binding to KPNA1/importin alpha-1. Interacts with EIF2AK2. Interacts with host nucleosome assembly protein NAP1L1; this interaction may be required for the transport of Tat within the nucleus, since the two proteins interact at the nuclear rim. Interacts with host C1QBP/SF2P32; this interaction involves lysine-acetylated Tat. Interacts with the host chemokine receptors CCR2, CCR3 and CXCR4. Interacts with host DPP4/CD26; this interaction may trigger an anti-proliferative effect. Interacts with host LDLR. Interacts with the host extracellular matrix metalloproteinase MMP1. Interacts with host PRMT6; this interaction mediates Tat's methylation. Interacts with, and is ubiquitinated by MDM2/Hdm2. Interacts with host PSMC3 and HTATIP2. Interacts with STAB1; this interaction may overcome SATB1-mediated repression of IL2 and IL2RA (interleukin) in T cells by binding to the same domain than HDAC1. Interacts (when acetylated) with human CDK13, thereby increasing HIV-1 mRNA splicing and promoting the production of the doubly spliced HIV-1 protein Nef. Interacts with host TBP; this interaction modulates the activity of transcriptional pre-initiation complex. Interacts with host RELA. Interacts with host PLSCR1; this interaction negatively regulates Tat transactivation activity by altering its subcellular distribution. Post-translationally, asymmetrical arginine methylation by host PRMT6 seems to diminish the transactivation capacity of Tat and affects the interaction with host CCNT1. Acetylation by EP300, CREBBP, GCN5L2/GCN5 and PCAF regulates the transactivation activity of Tat. EP300-mediated acetylation of Lys-50 promotes dissociation of Tat from the TAR RNA through the competitive binding to PCAF's bromodomain. In addition, the non-acetylated Tat's N-terminus can also interact with PCAF. PCAF-mediated acetylation of Lys-28 enhances Tat's binding to CCNT1. Lys-50 is deacetylated by SIRT1. In terms of processing, polyubiquitination by host MDM2 does not target Tat to degradation, but activates its transactivation function and fosters interaction with CCNT1 and TAR RNA. Post-translationally, phosphorylated by EIF2AK2 on serine and threonine residues adjacent to the basic region important for TAR RNA binding and function. Phosphorylation of Tat by EIF2AK2 is dependent on the prior activation of EIF2AK2 by dsRNA.

Its subcellular location is the host nucleus. It localises to the host nucleolus. It is found in the host cytoplasm. The protein resides in the secreted. In terms of biological role, transcriptional activator that increases RNA Pol II processivity, thereby increasing the level of full-length viral transcripts. Recognizes a hairpin structure at the 5'-LTR of the nascent viral mRNAs referred to as the transactivation responsive RNA element (TAR) and recruits the cyclin T1-CDK9 complex (P-TEFb complex) that will in turn hyperphosphorylate the RNA polymerase II to allow efficient elongation. The CDK9 component of P-TEFb and other Tat-activated kinases hyperphosphorylate the C-terminus of RNA Pol II that becomes stabilized and much more processive. Other factors such as HTATSF1/Tat-SF1, SUPT5H/SPT5, and HTATIP2 are also important for Tat's function. Besides its effect on RNA Pol II processivity, Tat induces chromatin remodeling of proviral genes by recruiting the histone acetyltransferases (HATs) CREBBP, EP300 and PCAF to the chromatin. This also contributes to the increase in proviral transcription rate, especially when the provirus integrates in transcriptionally silent region of the host genome. To ensure maximal activation of the LTR, Tat mediates nuclear translocation of NF-kappa-B by interacting with host RELA. Through its interaction with host TBP, Tat may also modulate transcription initiation. Tat can reactivate a latently infected cell by penetrating in it and transactivating its LTR promoter. In the cytoplasm, Tat is thought to act as a translational activator of HIV-1 mRNAs. Its function is as follows. Extracellular circulating Tat can be endocytosed by surrounding uninfected cells via the binding to several surface receptors such as CD26, CXCR4, heparan sulfate proteoglycans (HSPG) or LDLR. Neurons are rarely infected, but they internalize Tat via their LDLR. Through its interaction with nuclear HATs, Tat is potentially able to control the acetylation-dependent cellular gene expression. Modulates the expression of many cellular genes involved in cell survival, proliferation or in coding for cytokines or cytokine receptors. Tat plays a role in T-cell and neurons apoptosis. Tat induced neurotoxicity and apoptosis probably contribute to neuroAIDS. Circulating Tat also acts as a chemokine-like and/or growth factor-like molecule that binds to specific receptors on the surface of the cells, affecting many cellular pathways. In the vascular system, Tat binds to ITGAV/ITGB3 and ITGA5/ITGB1 integrins dimers at the surface of endothelial cells and competes with bFGF for heparin-binding sites, leading to an excess of soluble bFGF. The chain is Protein Tat from Homo sapiens (Human).